Here is a 104-residue protein sequence, read N- to C-terminus: Iron-sulfur cluster assembly protein CyaY (104 aa).

It belongs to the frataxin family.

Functionally, involved in iron-sulfur (Fe-S) cluster assembly. May act as a regulator of Fe-S biogenesis. This chain is Iron-sulfur cluster assembly protein CyaY, found in Vibrio vulnificus (strain CMCP6).